Reading from the N-terminus, the 320-residue chain is Porphobilinogen deaminase (320 aa).

At Cys-241 the chain carries S-(dipyrrolylmethanemethyl)cysteine.

This sequence belongs to the HMBS family. Monomer. The cofactor is dipyrromethane.

The catalysed reaction is 4 porphobilinogen + H2O = hydroxymethylbilane + 4 NH4(+). It participates in porphyrin-containing compound metabolism; protoporphyrin-IX biosynthesis; coproporphyrinogen-III from 5-aminolevulinate: step 2/4. Its function is as follows. Tetrapolymerization of the monopyrrole PBG into the hydroxymethylbilane pre-uroporphyrinogen in several discrete steps. The polypeptide is Porphobilinogen deaminase (Thermobifida fusca (strain YX)).